Reading from the N-terminus, the 534-residue chain is Peptide chain release factor 3 (534 aa).

Residues 9–278 (ARRRTFAIIS…FFVEHAPPPQ (270 aa)) form the tr-type G domain. GTP-binding positions include 18–25 (SHPDAGKT), 86–90 (DTPGH), and 140–143 (NKLD).

This sequence belongs to the TRAFAC class translation factor GTPase superfamily. Classic translation factor GTPase family. PrfC subfamily.

The protein resides in the cytoplasm. Its function is as follows. Increases the formation of ribosomal termination complexes and stimulates activities of RF-1 and RF-2. It binds guanine nucleotides and has strong preference for UGA stop codons. It may interact directly with the ribosome. The stimulation of RF-1 and RF-2 is significantly reduced by GTP and GDP, but not by GMP. This is Peptide chain release factor 3 from Xanthomonas euvesicatoria pv. vesicatoria (strain 85-10) (Xanthomonas campestris pv. vesicatoria).